A 589-amino-acid polypeptide reads, in one-letter code: Enhancer of polycomb-like protein 1 (589 aa).

Disordered stretches follow at residues 298–339, 403–430, 468–497, and 516–589; these read GDED…RPAE, MTPPASASSGSMDEPTPMDLDKPKPNPP, LPSPARDLSEEQSDRWKYDQSSDDEDDAPV, and LQTV…QPVS. Positions 474 to 487 are enriched in basic and acidic residues; that stretch reads DLSEEQSDRWKYDQ. Positions 557 to 566 are enriched in low complexity; the sequence is PQPNQSQSLP. The span at 567–589 shows a compositional bias: pro residues; that stretch reads LPQPQQPVAQPQPQPQPQAQPVS.

It belongs to the enhancer of polycomb family. As to quaternary structure, component of the NuA4 histone acetyltransferase complex.

The protein resides in the nucleus. In terms of biological role, component of the NuA4 histone acetyltransferase complex which is involved in transcriptional activation of selected genes principally by acetylation of nucleosomal histone H4 and H2A. The NuA4 complex is also involved in DNA repair. Involved in gene silencing by neighboring heterochromatin, blockage of the silencing spreading along the chromosome, and required for cell cycle progression through G2/M. The polypeptide is Enhancer of polycomb-like protein 1 (epl-1) (Neurospora crassa (strain ATCC 24698 / 74-OR23-1A / CBS 708.71 / DSM 1257 / FGSC 987)).